A 226-amino-acid polypeptide reads, in one-letter code: PKHD-type hydroxylase Plav_0377 (226 aa).

The 101-residue stretch at 78–178 (KVLPPRFNRY…RLASFFWVQS (101 aa)) folds into the Fe2OG dioxygenase domain. Fe cation contacts are provided by H96, D98, and H159. Residue R169 participates in 2-oxoglutarate binding.

Fe(2+) is required as a cofactor. Requires L-ascorbate as cofactor.

The protein is PKHD-type hydroxylase Plav_0377 of Parvibaculum lavamentivorans (strain DS-1 / DSM 13023 / NCIMB 13966).